Reading from the N-terminus, the 301-residue chain is Securin (301 aa).

3 disordered regions span residues 1–55 (MLPR…RTVL), 82–120 (DSPTILEPNSQGISRSAVQERSKRLSASPRRSSLTDTPL), and 218–284 (ASDQ…RSIH). The D-box 1 signature appears at 33–36 (RAPL). Over residues 38–50 (STKQSNAPSSVTV) the composition is skewed to polar residues. The short motif at 52–55 (RTVL) is the D-box 2 element. 3 stretches are compositionally biased toward polar residues: residues 88 to 98 (EPNSQGISRSA), 110 to 119 (PRRSSLTDTP), and 231 to 245 (VSKQSSSRTRLSTVY). 2 consecutive repeats follow at residues 250–260 (ASGKSIPRPLS) and 270–280 (ASGNSRRRPLS).

This sequence belongs to the securin family. As to quaternary structure, interacts with the caspase-like cut1, and prevents its protease activity probably by covering its active site. In terms of processing, ubiquitinated by the anaphase promoting complex (APC) at the onset of anaphase, conducting to its degradation.

It localises to the cytoplasm. It is found in the nucleus. Functionally, regulatory protein, which plays a central role in chromosome stability. Probably acts by blocking the action of key proteins. During the mitosis, it blocks separase/cut1 function, preventing the proteolysis of the cohesin complex and the subsequent segregation of the chromosomes. At the onset of anaphase, it is ubiquitinated, conducting to its destruction and to the liberation of cut1. In Schizosaccharomyces pombe (strain 972 / ATCC 24843) (Fission yeast), this protein is Securin (cut2).